The chain runs to 548 residues: CTP synthase (548 aa).

The interval M1–L266 is amidoligase domain. S14 contributes to the CTP binding site. S14 serves as a coordination point for UTP. Residues S15–I20 and D72 contribute to the ATP site. Positions 72 and 140 each coordinate Mg(2+). CTP is bound by residues D147–E149, K187–Q192, and K223. UTP contacts are provided by residues K187–Q192 and K223. The region spanning T291–R543 is the Glutamine amidotransferase type-1 domain. G353 contacts L-glutamine. Catalysis depends on C380, which acts as the Nucleophile; for glutamine hydrolysis. L-glutamine-binding positions include L381 to Q384, E404, and R471. Catalysis depends on residues H516 and E518.

It belongs to the CTP synthase family. As to quaternary structure, homotetramer.

The enzyme catalyses UTP + L-glutamine + ATP + H2O = CTP + L-glutamate + ADP + phosphate + 2 H(+). The catalysed reaction is L-glutamine + H2O = L-glutamate + NH4(+). It catalyses the reaction UTP + NH4(+) + ATP = CTP + ADP + phosphate + 2 H(+). It functions in the pathway pyrimidine metabolism; CTP biosynthesis via de novo pathway; CTP from UDP: step 2/2. Allosterically activated by GTP, when glutamine is the substrate; GTP has no effect on the reaction when ammonia is the substrate. The allosteric effector GTP functions by stabilizing the protein conformation that binds the tetrahedral intermediate(s) formed during glutamine hydrolysis. Inhibited by the product CTP, via allosteric rather than competitive inhibition. Functionally, catalyzes the ATP-dependent amination of UTP to CTP with either L-glutamine or ammonia as the source of nitrogen. Regulates intracellular CTP levels through interactions with the four ribonucleotide triphosphates. This Blochmanniella pennsylvanica (strain BPEN) protein is CTP synthase.